The chain runs to 598 residues: Pentatricopeptide repeat-containing protein At1g09900 (598 aa).

PPR repeat units follow at residues 101 to 135, 136 to 170, 171 to 201, 203 to 237, 238 to 272, 273 to 307, 308 to 342, 343 to 377, 378 to 412, 413 to 447, 448 to 482, 483 to 517, 518 to 552, and 553 to 587; these read EDVESNNHLRQMVRTGELEEGFKFLENMVYHGNVP, DIIPCTTLIRGFCRLGKTRKAAKILEILEGSGAVP, DVITYNVMISGYCKAGEINNALSVLDRMSVS, DVVTYNTILRSLCDSGKLKQAMEVLDRMLQRDCYP, DVITYTILIEATCRDSGVGHAMKLLDEMRDRGCTP, DVVTYNVLVNGICKEGRLDEAIKFLNDMPSSGCQP, NVITHNIILRSMCSTGRWMDAEKLLADMLRKGFSP, SVVTFNILINFLCRKGLLGRAIDILEKMPQHGCQP, NSLSYNPLLHGFCKEKKMDRAIEYLERMVSRGCYP, DIVTYNTMLTALCKDGKVEDAVEILNQLSSKGCSP, VLITYNTVIDGLAKAGKTGKAIKLLDEMRAKDLKP, DTITYSSLVGGLSREGKVDEAIKFFHEFERMGIRP, NAVTFNSIMLGLCKSRQTDRAIDFLVFMINRGCKP, and NETSYTILIEGLAYEGMAKEALELLNELCNKGLMK.

It belongs to the PPR family. P subfamily.

This is Pentatricopeptide repeat-containing protein At1g09900 from Arabidopsis thaliana (Mouse-ear cress).